A 599-amino-acid chain; its full sequence is BICD family-like cargo adapter 1 (599 aa).

Residues 1-27 (MELPISFLSDSSRPAASSERGDQAALG) form a disordered region. The CC1 box signature appears at 76–80 (AARLG). Residues 80–341 (GKALLERNQD…WEAHCQVRSL (262 aa)) are a coiled coil. The tract at residues 352-375 (DSAVSTDSSMDESSETSSAKDVPA) is disordered. The stretch at 405-536 (EDDGLEEQIK…LEAWQDDMHR (132 aa)) forms a coiled coil.

It belongs to the BICDR family. Part of a tripartite complex with dynein and dynactin, acts an adapter linking the dynein motor complex and dynactin. Interacts with KIF1C. Interacts with RAB6A and RAB6B; interaction is specific to Rab6.

It is found in the cytoplasm. Its subcellular location is the cytoskeleton. It localises to the microtubule organizing center. The protein resides in the centrosome. Functionally, acts as an adapter protein linking the dynein motor complex to various cargos and converts dynein from a non-processive to a highly processive motor in the presence of dynactin. Facilitates the interaction between dynein and dynactin and activates dynein processivity (the ability to move along a microtubule for a long distance without falling off the track). Predominantly recruits 2 dyneins, which increases both the force and speed of the microtubule motor. Component of secretory vesicle machinery in developing neurons that acts as a regulator of neurite outgrowth. Regulates the secretory vesicle transport by controlling the accumulation of Rab6-containing secretory vesicles in the pericentrosomal region restricting anterograde secretory transport during the early phase of neuronal differentiation, thereby inhibiting neuritogenesis. This chain is BICD family-like cargo adapter 1 (bicdl1), found in Xenopus tropicalis (Western clawed frog).